We begin with the raw amino-acid sequence, 407 residues long: Bifunctional enzyme IspD/IspF (407 aa).

Positions 1 to 247 (MVHIQADGAR…RLSHNALPDV (247 aa)) are 2-C-methyl-D-erythritol 4-phosphate cytidylyltransferase. Positions 248 to 407 (RTGNGYDVHQ…ATVVFQGKPQ (160 aa)) are 2-C-methyl-D-erythritol 2,4-cyclodiphosphate synthase. The a divalent metal cation site is built by D254 and H256. 4-CDP-2-C-methyl-D-erythritol 2-phosphate is bound by residues 254–256 (DVH) and 280–281 (HS). H288 is a binding site for a divalent metal cation. 4-CDP-2-C-methyl-D-erythritol 2-phosphate-binding positions include 302–304 (DIG), 378–381 (TTNE), F385, and R388.

This sequence in the N-terminal section; belongs to the IspD/TarI cytidylyltransferase family. IspD subfamily. In the C-terminal section; belongs to the IspF family. A divalent metal cation serves as cofactor.

The catalysed reaction is 2-C-methyl-D-erythritol 4-phosphate + CTP + H(+) = 4-CDP-2-C-methyl-D-erythritol + diphosphate. The enzyme catalyses 4-CDP-2-C-methyl-D-erythritol 2-phosphate = 2-C-methyl-D-erythritol 2,4-cyclic diphosphate + CMP. The protein operates within isoprenoid biosynthesis; isopentenyl diphosphate biosynthesis via DXP pathway; isopentenyl diphosphate from 1-deoxy-D-xylulose 5-phosphate: step 2/6. Its pathway is isoprenoid biosynthesis; isopentenyl diphosphate biosynthesis via DXP pathway; isopentenyl diphosphate from 1-deoxy-D-xylulose 5-phosphate: step 4/6. Functionally, bifunctional enzyme that catalyzes the formation of 4-diphosphocytidyl-2-C-methyl-D-erythritol from CTP and 2-C-methyl-D-erythritol 4-phosphate (MEP) (IspD), and catalyzes the conversion of 4-diphosphocytidyl-2-C-methyl-D-erythritol 2-phosphate (CDP-ME2P) to 2-C-methyl-D-erythritol 2,4-cyclodiphosphate (ME-CPP) with a corresponding release of cytidine 5-monophosphate (CMP) (IspF). The protein is Bifunctional enzyme IspD/IspF of Allorhizobium ampelinum (strain ATCC BAA-846 / DSM 112012 / S4) (Agrobacterium vitis (strain S4)).